The chain runs to 345 residues: 2-oxoglutarate and iron-dependent oxygenase domain-containing protein 2 (345 aa).

Positions 207–301 (DSHKAFVVKY…RWNLIIWMRA (95 aa)) constitute a Fe2OG dioxygenase domain. The Fe cation site is built by His227, Asp229, and His282. Arg292 serves as a coordination point for 2-oxoglutarate.

Belongs to the OGFOD2 family. The cofactor is Fe(2+). L-ascorbate is required as a cofactor.

The sequence is that of 2-oxoglutarate and iron-dependent oxygenase domain-containing protein 2 (ogfod2) from Danio rerio (Zebrafish).